A 209-amino-acid polypeptide reads, in one-letter code: UPF0174 protein jhp_1493 (209 aa).

This sequence belongs to the UPF0174 family.

This Helicobacter pylori (strain J99 / ATCC 700824) (Campylobacter pylori J99) protein is UPF0174 protein jhp_1493.